The sequence spans 1375 residues: DNA-directed RNA polymerase subunit beta (1375 aa).

This sequence belongs to the RNA polymerase beta chain family. The RNAP catalytic core consists of 2 alpha, 1 beta, 1 beta' and 1 omega subunit. When a sigma factor is associated with the core the holoenzyme is formed, which can initiate transcription.

The catalysed reaction is RNA(n) + a ribonucleoside 5'-triphosphate = RNA(n+1) + diphosphate. Functionally, DNA-dependent RNA polymerase catalyzes the transcription of DNA into RNA using the four ribonucleoside triphosphates as substrates. The chain is DNA-directed RNA polymerase subunit beta from Campylobacter jejuni subsp. jejuni serotype O:6 (strain 81116 / NCTC 11828).